The primary structure comprises 353 residues: Sulfate/thiosulfate import ATP-binding protein CysA (353 aa).

An ABC transporter domain is found at 3 to 237; it reads IQVKNIEKHF…PATPFVFDFL (235 aa). 35 to 42 provides a ligand contact to ATP; it reads GPSGCGKT.

This sequence belongs to the ABC transporter superfamily. Sulfate/tungstate importer (TC 3.A.1.6) family. In terms of assembly, the complex is composed of two ATP-binding proteins (CysA), two transmembrane proteins (CysT and CysW) and a solute-binding protein (CysP).

Its subcellular location is the cell inner membrane. It carries out the reaction sulfate(out) + ATP + H2O = sulfate(in) + ADP + phosphate + H(+). It catalyses the reaction thiosulfate(out) + ATP + H2O = thiosulfate(in) + ADP + phosphate + H(+). In terms of biological role, part of the ABC transporter complex CysAWTP involved in sulfate/thiosulfate import. Responsible for energy coupling to the transport system. The chain is Sulfate/thiosulfate import ATP-binding protein CysA from Acinetobacter baylyi (strain ATCC 33305 / BD413 / ADP1).